We begin with the raw amino-acid sequence, 223 residues long: ATP phosphoribosyltransferase (223 aa).

The protein belongs to the ATP phosphoribosyltransferase family. Short subfamily. As to quaternary structure, heteromultimer composed of HisG and HisZ subunits.

It localises to the cytoplasm. The catalysed reaction is 1-(5-phospho-beta-D-ribosyl)-ATP + diphosphate = 5-phospho-alpha-D-ribose 1-diphosphate + ATP. It participates in amino-acid biosynthesis; L-histidine biosynthesis; L-histidine from 5-phospho-alpha-D-ribose 1-diphosphate: step 1/9. Its function is as follows. Catalyzes the condensation of ATP and 5-phosphoribose 1-diphosphate to form N'-(5'-phosphoribosyl)-ATP (PR-ATP). Has a crucial role in the pathway because the rate of histidine biosynthesis seems to be controlled primarily by regulation of HisG enzymatic activity. The protein is ATP phosphoribosyltransferase of Desulfitobacterium hafniense (strain Y51).